The primary structure comprises 606 residues: WD repeat-containing protein 1 (606 aa).

WD repeat units follow at residues 4-45, 48-87, 93-135, 138-176, 180-218, 224-263, 270-306, 311-351, 358-408, 432-474, 480-518, 523-561, and 566-604; these read EIKK…LRNI, PAIA…IWDT, LLKY…LWDT, SVGE…FFEG, KFKF…IYDG, VCAL…IWDV, STFP…YLDK, KPLR…YWDS, SFSG…KLDV, LKDQ…VYSI, KDEG…VFSV, SENN…VWTL, and TKVK…EWTI. Residues K28, K81, K95, and K115 each carry the N6-acetyllysine modification. Phosphotyrosine is present on Y238. Residue K480 is modified to N6-acetyllysine.

Belongs to the WD repeat AIP1 family.

It localises to the cytoplasm. The protein localises to the cytoskeleton. It is found in the cell projection. Its subcellular location is the podosome. Functionally, induces disassembly of actin filaments in conjunction with ADF/cofilin family proteins. Enhances cofilin-mediated actin severing. Involved in cytokinesis. Involved in chemotactic cell migration by restricting lamellipodial membrane protrusions. Involved in myocardium sarcomere organization. Required for cardiomyocyte growth at the postnatal and maintenance at the adult stage. Involved in neutrophil actin dynamics and migration. Involved in megakaryocyte maturation and platelet shedding. Required for the establishment of planar cell polarity (PCP) during follicular epithelium development and for cell shape changes during PCP; the function seems to implicate cooperation with CFL1 and/or DSTN/ADF. Involved in the generation/maintenance of cortical tension. Involved in assembly and maintenance of epithelial apical cell junctions and plays a role in the organization of the perijunctional actomyosin belt. This Mus musculus (Mouse) protein is WD repeat-containing protein 1 (Wdr1).